A 219-amino-acid chain; its full sequence is Ran-specific GTPase-activating protein 1 (219 aa).

Basic and acidic residues-rich tracts occupy residues 1–12 (MAEVERKEEQAK), 33–45 (AVGD…EAKK), and 57–72 (PRKD…DNID). The tract at residues 1–72 (MAEVERKEEQ…KGGEERDNID (72 aa)) is disordered. The RanBD1 domain maps to 70–210 (NIDAAEVVEK…YDLGRAHNEK (141 aa)).

It belongs to the RANBP1 family.

It is found in the cytoplasm. The protein resides in the nucleus. Functionally, important for the export of protein containing nuclear export signal (NES) out of the nucleus. The sequence is that of Ran-specific GTPase-activating protein 1 (YRB1) from Encephalitozoon cuniculi (strain GB-M1) (Microsporidian parasite).